We begin with the raw amino-acid sequence, 125 residues long: Fluoride-specific ion channel FluC (125 aa).

The next 4 helical transmembrane spans lie at 1-21 (MFATFGFIALFAVLGAWARYG), 34-54 (FPWATLSINVLGCFLMGFLFF), 72-92 (TGGLGAYTTFSTFSLETLVLF), and 101-121 (LLYMFTSLFLCVGAAFAGAWI). Na(+)-binding residues include glycine 76 and threonine 79.

This sequence belongs to the fluoride channel Fluc/FEX (TC 1.A.43) family.

Its subcellular location is the cell inner membrane. The catalysed reaction is fluoride(in) = fluoride(out). With respect to regulation, na(+) is not transported, but it plays an essential structural role and its presence is essential for fluoride channel function. In terms of biological role, fluoride-specific ion channel. Important for reducing fluoride concentration in the cell, thus reducing its toxicity. The sequence is that of Fluoride-specific ion channel FluC from Acidithiobacillus ferrooxidans (strain ATCC 23270 / DSM 14882 / CIP 104768 / NCIMB 8455) (Ferrobacillus ferrooxidans (strain ATCC 23270)).